The following is a 147-amino-acid chain: Ribosome maturation factor RimP (147 aa).

It belongs to the RimP family.

The protein resides in the cytoplasm. Its function is as follows. Required for maturation of 30S ribosomal subunits. The polypeptide is Ribosome maturation factor RimP (Thermosipho melanesiensis (strain DSM 12029 / CIP 104789 / BI429)).